The following is a 658-amino-acid chain: Probable transketolase (658 aa).

Residue His24 coordinates substrate. Thiamine diphosphate-binding positions include His64 and 113 to 115 (GPL). Mg(2+) is bound at residue Asp154. Residues Gly155 and Asn184 each contribute to the thiamine diphosphate site. Mg(2+) contacts are provided by Asn184 and Ile186. Positions 259, 354, and 381 each coordinate substrate. His259 is a thiamine diphosphate binding site. Glu408 acts as the Proton donor in catalysis. Phe434 is a thiamine diphosphate binding site. The substrate site is built by His458, Asp466, and Arg517.

Belongs to the transketolase family. As to quaternary structure, homodimer. It depends on Mg(2+) as a cofactor. Ca(2+) is required as a cofactor. Mn(2+) serves as cofactor. Requires Co(2+) as cofactor. The cofactor is thiamine diphosphate.

The enzyme catalyses D-sedoheptulose 7-phosphate + D-glyceraldehyde 3-phosphate = aldehydo-D-ribose 5-phosphate + D-xylulose 5-phosphate. Necessary for high-efficiency recombination chromosomal DNA during genetic transformation. Its function is as follows. Catalyzes the transfer of a two-carbon ketol group from a ketose donor to an aldose acceptor, via a covalent intermediate with the cofactor thiamine pyrophosphate. This is Probable transketolase (tkt) from Streptococcus pneumoniae serotype 4 (strain ATCC BAA-334 / TIGR4).